Here is a 218-residue protein sequence, read N- to C-terminus: Regulator of G-protein signaling 20 (218 aa).

Basic and acidic residues predominate over residues 1 to 10 (MGSERTEMRK). The interval 1–26 (MGSERTEMRKRQMAATQETPGTAQAQ) is disordered. Residues 14-26 (AATQETPGTAQAQ) are compositionally biased toward polar residues. The RGS domain occupies 92–208 (SFDKLMLTPA…MNSAIYKDLL (117 aa)).

In terms of assembly, forms a complex with G(alpha)z/i2 subunits and mu-opioid receptors; the formation of this complex results in mu-opioid receptor desensitization. Interacts with OPRM1. Fatty acylated. Heavily palmitoylated in the cysteine string motif. In terms of processing, N- and O-glycosylated in synapsomal membranes. Post-translationally, sumoylated by SUMO1 and SUM02 in synaptosomes. The sumoylated forms act as a scaffold for sequestering mu-opioid receptor-activated G(alpha) subunits.

The protein resides in the membrane. It is found in the nucleus. It localises to the cytoplasm. In terms of biological role, inhibits signal transduction by increasing the GTPase activity of G protein alpha subunits thereby driving them into their inactive GDP-bound form. Binds selectively to G(z)-alpha and G(alpha)-i2 subunits, accelerates their GTPase activity and regulates their signaling activities. The G(z)-alpha activity is inhibited by the phosphorylation and palmitoylation of the G-protein. Negatively regulates mu-opioid receptor-mediated activation of the G-proteins. In Gallus gallus (Chicken), this protein is Regulator of G-protein signaling 20 (RGS20).